The primary structure comprises 391 residues: Serpin B13 (391 aa).

It belongs to the serpin family. Ov-serpin subfamily. As to expression, skin specific.

It is found in the cytoplasm. In terms of biological role, may play a role in the proliferation or differentiation of keratinocytes. The sequence is that of Serpin B13 (SERPINB13) from Homo sapiens (Human).